The primary structure comprises 99 residues: UPF0473 protein SMU_2077c (99 aa).

This sequence belongs to the UPF0473 family.

The sequence is that of UPF0473 protein SMU_2077c from Streptococcus mutans serotype c (strain ATCC 700610 / UA159).